The sequence spans 63 residues: Adipokinetic prohormone type 1 (63 aa).

The signal sequence occupies residues 1–22 (MVQRCLVVALLVVVVAAALCSA). A Pyrrolidone carboxylic acid modification is found at glutamine 23. Threonine 32 is modified (threonine amide).

It belongs to the AKH/HRTH/RPCH family. Adipokinetic hormone precursor-related peptide (APRP) can form three type of disulfide-bond dimers: p1 (alpha-alpha), p2 (alpha-beta), and p3 (beta-beta).

The protein localises to the secreted. Functionally, this hormone, released from cells in the corpora cardiaca, causes release of diglycerides from the fat body and stimulation of muscles to use these diglycerides as an energy source during energy-demanding processes. The polypeptide is Adipokinetic prohormone type 1 (Schistocerca nitens (Vagrant locust)).